Here is a 571-residue protein sequence, read N- to C-terminus: MSDEKYPGPLVVEGKLVDAERLKKQSNYLRGGIAEDLHDGLTGGFNGDNFLLIRFHGMYQQDDRDIRAERAEQKLDARHAMMLRCRLPGGIMTPRQWLAIDKFATDNTIYGSIRLTNRQTFQFHGILKGNVKPAHQMLHEVGLDALATANDVNRNVLCSSNPIESELHQEAYEWAKKLSEHLLPRTRAYAEIWLDQEKVATTDEEPILGETYLPRKFKTTVVVPPHNDVDLHANDMNFVAIAENGRLVGFNLLVGGGLSIDHGNKATYARTASEFGYLPLSKILDVAEAVVTTQRDWGNRTDRKNAKTKYTLERVGPEVFKAEVERRAGMTFEPIRPYEFTTRGDRFGWVKGIDHKWHLTLFIENGRLLDYPDRPLKTGLAEIAKIHQGDFRLTANQNLIVAGVPESEKENIERLALSHGLMENVSHQRENSMACVAFPTCPLAMAEAERFLPQFVTRVEAIMNAHGVGDEHIVLRVTGCPNGCGRALLAEIGLVGKAPGRYNLHLGGNRIGTRIPRMYQENINEEQILATLDELIGRWSQERNADEGFGDFTLRAGVVKPVLDPARDFWQ.

[4Fe-4S] cluster contacts are provided by C435, C441, C480, and C484. C484 serves as a coordination point for siroheme.

The protein belongs to the nitrite and sulfite reductase 4Fe-4S domain family. Alpha(8)-beta(8). The alpha component is a flavoprotein, the beta component is a hemoprotein. Siroheme serves as cofactor. It depends on [4Fe-4S] cluster as a cofactor.

The catalysed reaction is hydrogen sulfide + 3 NADP(+) + 3 H2O = sulfite + 3 NADPH + 4 H(+). It functions in the pathway sulfur metabolism; hydrogen sulfide biosynthesis; hydrogen sulfide from sulfite (NADPH route): step 1/1. In terms of biological role, component of the sulfite reductase complex that catalyzes the 6-electron reduction of sulfite to sulfide. This is one of several activities required for the biosynthesis of L-cysteine from sulfate. This Erwinia tasmaniensis (strain DSM 17950 / CFBP 7177 / CIP 109463 / NCPPB 4357 / Et1/99) protein is Sulfite reductase [NADPH] hemoprotein beta-component.